The primary structure comprises 613 residues: MKSHQGHQKKRRMREMGFSTLLLGASLLLPVSVSASAPPSIYSRPYDSSPFLSPQIPLEDLSSLSGTHEFTLRHIFHRGTYQHPDLHRRLDIQPHTQLWVLSEDGTDKEAAEFDTPLIASSHPVTIQRLADRRPSVIEEHLLAARMSGSASVLSESDWVMDTLAGPDVTDKNSVLTFAKMTANDYIQEPDTEDWQDIHGRFNYSSSFGWQTDGLRGHIYADKTNSTIVISLKGTSPALFDGAGTTTNDKLNDNLYFSCCCGQGGSYLWRQVCDCQKSAFTANLTCIIEAMNDENRYYRAALDLYSNVTELYPDANVWLTGHSLGGAMTSLLGLTYGLPAVTFEAVPEALPAARLGLPSPPGHDPRLPQSRRYTGAYHFGHTADPVYMGTCNGVSSVCTWGGYAMESACHTGQMCVYDTVDDKGWRVAIGTHRIKAVISDVLEVYDDVPQCAPEEECYDCELWKFFRSNGSEHTTTTTTTTTTTTTPPSTSTSTCKTPGWWGCLDESTTTTATSTSTTSTSTTTCKTPGWFGCKDPTTSTTATPEPSLTTTLPLMTSTTCAHPGWFGCRDPTSPTSTPTQTPPPGDTTSCESPGFFWGCWDPKTTSDHPITTPP.

Residues 1–20 (MKSHQGHQKKRRMREMGFST) lie on the Cytoplasmic side of the membrane. The chain crosses the membrane as a helical; Signal-anchor for type II membrane protein span at residues 21–43 (LLLGASLLLPVSVSASAPPSIYS). Residues 44–613 (RPYDSSPFLS…TSDHPITTPP (570 aa)) are Lumenal-facing. Residues N202, N224, N282, and N306 are each glycosylated (N-linked (GlcNAc...) asparagine). Catalysis depends on S322, which acts as the Charge relay system. N468 carries N-linked (GlcNAc...) asparagine glycosylation. The segment at 472 to 492 (HTTTTTTTTTTTTTPPSTSTS) is disordered. Over residues 473–492 (TTTTTTTTTTTTTPPSTSTS) the composition is skewed to low complexity.

Belongs to the AB hydrolase superfamily. Lipase family. Binds to both phosphatidylinositol (PI) and phosphatidylinositol 3,5-bisphosphate (PIP2).

Its subcellular location is the endosome. The protein localises to the multivesicular body membrane. The protein resides in the prevacuolar compartment membrane. It catalyses the reaction a triacylglycerol + H2O = a diacylglycerol + a fatty acid + H(+). Lipase which is essential for lysis of subvacuolar cytoplasm to vacuole targeted bodies and intravacuolar autophagic bodies. Involved in the lysis of intravacuolar multivesicular body (MVB) vesicles. The intravacuolar membrane disintegration by atg15 is critical to life span extension. The chain is Putative lipase atg15 (atg15) from Aspergillus terreus (strain NIH 2624 / FGSC A1156).